Here is a 314-residue protein sequence, read N- to C-terminus: Ribonuclease Z (314 aa).

Zn(2+) is bound by residues His62, His64, Asp66, His67, His139, Asp210, and His268. Asp66 acts as the Proton acceptor in catalysis.

This sequence belongs to the RNase Z family. Homodimer. It depends on Zn(2+) as a cofactor.

The catalysed reaction is Endonucleolytic cleavage of RNA, removing extra 3' nucleotides from tRNA precursor, generating 3' termini of tRNAs. A 3'-hydroxy group is left at the tRNA terminus and a 5'-phosphoryl group is left at the trailer molecule.. In terms of biological role, zinc phosphodiesterase, which displays some tRNA 3'-processing endonuclease activity. Probably involved in tRNA maturation, by removing a 3'-trailer from precursor tRNA. This is Ribonuclease Z from Acaryochloris marina (strain MBIC 11017).